The chain runs to 391 residues: Small ribosomal subunit protein bS1 (391 aa).

4 S1 motif domains span residues 16–90, 108–173, 194–262, and 279–348; these read GDKV…LSRR, NEII…LSRK, GDVI…LSIK, and NDVI…LSIK.

The protein belongs to the bacterial ribosomal protein bS1 family.

Binds mRNA; thus facilitating recognition of the initiation point. It is needed to translate mRNA with a short Shine-Dalgarno (SD) purine-rich sequence. This Staphylococcus aureus (strain N315) protein is Small ribosomal subunit protein bS1 (rpsA).